Consider the following 311-residue polypeptide: MSLPDVQSTAPDVRISLTRVGVKNVRKLVEVGRPGKTRPAIFISEFDVFVDLPSSLKGANLSRNFEVIDEVLQQATSGDVKGIEDVCGIVSRKLLDHHEYADRTEVFMRSFYMMNRETPVSKTSCQEVINVYAHAVAQRTNGKPMVRKSVGAEVTGITACPCAQNIMKDHAMHVMEQLEIPEDKISAFFNEIPMASHNQRGRGFLCVETDGDIIVPLEKIVTVLKESMSAKIYELLKRGDESYVVMAAHKNARFVEDCVREMARRVVSTFGDLPGDTHITIRQTNEESIHQHDAYAERKATLAELRDELSI.

This sequence belongs to the GTP cyclohydrolase IV family. In terms of assembly, homodimer. Fe(2+) is required as a cofactor.

It catalyses the reaction GTP + H2O = 7,8-dihydroneopterin 2',3'-cyclic phosphate + formate + diphosphate + H(+). Its pathway is cofactor biosynthesis; 5,6,7,8-tetrahydromethanopterin biosynthesis. Its function is as follows. Converts GTP to 7,8-dihydro-D-neopterin 2',3'-cyclic phosphate, the first intermediate in the biosynthesis of coenzyme methanopterin. This chain is GTP cyclohydrolase MptA, found in Methanocorpusculum labreanum (strain ATCC 43576 / DSM 4855 / Z).